The sequence spans 571 residues: Penicillin-binding protein activator LpoA (571 aa).

The N-terminal stretch at methionine 1–glycine 26 is a signal peptide. Cysteine 27 is lipidated: N-palmitoyl cysteine. A lipid anchor (S-diacylglycerol cysteine) is attached at cysteine 27.

This sequence belongs to the LpoA family. As to quaternary structure, interacts with PBP1a.

Its subcellular location is the cell outer membrane. In terms of biological role, regulator of peptidoglycan synthesis that is essential for the function of penicillin-binding protein 1A (PBP1a). In Pasteurella multocida (strain Pm70), this protein is Penicillin-binding protein activator LpoA.